We begin with the raw amino-acid sequence, 331 residues long: Glycerol-3-phosphate dehydrogenase [NAD(P)+] (331 aa).

NADPH-binding residues include Trp11, Arg30, and Lys105. Sn-glycerol 3-phosphate contacts are provided by Lys105, Gly134, and Ser136. Ala138 is a binding site for NADPH. Lys189, Asp242, Ser252, Arg253, and Asn254 together coordinate sn-glycerol 3-phosphate. Lys189 serves as the catalytic Proton acceptor. Arg253 lines the NADPH pocket. NADPH is bound by residues Val277 and Glu279.

This sequence belongs to the NAD-dependent glycerol-3-phosphate dehydrogenase family.

The protein localises to the cytoplasm. The enzyme catalyses sn-glycerol 3-phosphate + NAD(+) = dihydroxyacetone phosphate + NADH + H(+). It carries out the reaction sn-glycerol 3-phosphate + NADP(+) = dihydroxyacetone phosphate + NADPH + H(+). Its pathway is membrane lipid metabolism; glycerophospholipid metabolism. Functionally, catalyzes the reduction of the glycolytic intermediate dihydroxyacetone phosphate (DHAP) to sn-glycerol 3-phosphate (G3P), the key precursor for phospholipid synthesis. This Janthinobacterium sp. (strain Marseille) (Minibacterium massiliensis) protein is Glycerol-3-phosphate dehydrogenase [NAD(P)+].